The following is a 420-amino-acid chain: Subtilisin-like protease 7 (420 aa).

The N-terminal stretch at 1–20 (MGFITKAIPLALAAASVING) is a signal peptide. Positions 21-119 (AEIMETRAGV…IERDARVQIN (99 aa)) are excised as a propeptide. The Inhibitor I9 domain maps to 36–118 (KYIVVMNDGM…YIERDARVQI (83 aa)). Residues 129-413 (SWGLARVGSK…SFPLNIYEEQ (285 aa)) enclose the Peptidase S8 domain. Active-site charge relay system residues include D161 and H192. Residues N222 and N252 are each glycosylated (N-linked (GlcNAc...) asparagine). S346 serves as the catalytic Charge relay system. Residue N396 is glycosylated (N-linked (GlcNAc...) asparagine).

The protein belongs to the peptidase S8 family.

The protein resides in the secreted. Functionally, secreted subtilisin-like serine protease with keratinolytic activity that contributes to pathogenicity. This is Subtilisin-like protease 7 (SUB7) from Arthroderma benhamiae (strain ATCC MYA-4681 / CBS 112371) (Trichophyton mentagrophytes).